A 223-amino-acid polypeptide reads, in one-letter code: Phosphoribosylformylglycinamidine synthase subunit PurQ (223 aa).

A Glutamine amidotransferase type-1 domain is found at 4 to 223 (RIGVITFPGT…FQSVLSTLVS (220 aa)). The Nucleophile role is filled by cysteine 87. Active-site residues include histidine 195 and glutamate 197.

Part of the FGAM synthase complex composed of 1 PurL, 1 PurQ and 2 PurS subunits.

The protein localises to the cytoplasm. The catalysed reaction is N(2)-formyl-N(1)-(5-phospho-beta-D-ribosyl)glycinamide + L-glutamine + ATP + H2O = 2-formamido-N(1)-(5-O-phospho-beta-D-ribosyl)acetamidine + L-glutamate + ADP + phosphate + H(+). It carries out the reaction L-glutamine + H2O = L-glutamate + NH4(+). The protein operates within purine metabolism; IMP biosynthesis via de novo pathway; 5-amino-1-(5-phospho-D-ribosyl)imidazole from N(2)-formyl-N(1)-(5-phospho-D-ribosyl)glycinamide: step 1/2. Its function is as follows. Part of the phosphoribosylformylglycinamidine synthase complex involved in the purines biosynthetic pathway. Catalyzes the ATP-dependent conversion of formylglycinamide ribonucleotide (FGAR) and glutamine to yield formylglycinamidine ribonucleotide (FGAM) and glutamate. The FGAM synthase complex is composed of three subunits. PurQ produces an ammonia molecule by converting glutamine to glutamate. PurL transfers the ammonia molecule to FGAR to form FGAM in an ATP-dependent manner. PurS interacts with PurQ and PurL and is thought to assist in the transfer of the ammonia molecule from PurQ to PurL. The chain is Phosphoribosylformylglycinamidine synthase subunit PurQ from Corynebacterium jeikeium (strain K411).